Reading from the N-terminus, the 377-residue chain is Leukocyte elastase inhibitor (377 aa).

Residue Met-1 is modified to N-acetylmethionine.

This sequence belongs to the serpin family. Ov-serpin subfamily.

It is found in the cytoplasm. Regulates the activity of the neutrophil proteases. This Xenopus tropicalis (Western clawed frog) protein is Leukocyte elastase inhibitor (serpinb1).